A 935-amino-acid polypeptide reads, in one-letter code: Epstein-Barr nuclear antigen 3 (935 aa).

Disordered regions lie at residues 1 to 89 (MDKD…DLPG), 342 to 373 (HVEG…VSRG), 399 to 446 (TEQG…VPEP), 611 to 634 (KQAS…MEGP), and 883 to 908 (HGRP…DHEP). A compositionally biased stretch (acidic residues) spans 10–19 (ALDDNMEEEV). Polar residues predominate over residues 20–29 (PSTSVVQEQV). Over residues 352-366 (EESEDTESDGDDEDL) the composition is skewed to acidic residues. Basic and acidic residues predominate over residues 399–410 (TEQGKEVLEKAR). The segment covering 431-440 (SDETATSHGS) has biased composition (polar residues). The span at 615–630 (VEVQPPQVTQVSPQQP) shows a compositional bias: low complexity.

This sequence belongs to the herpesviridae EBNA-3 family. In terms of assembly, interacts with human UCKL1. Interacts with host CTPB1; this interaction seems important for EBNA3-mediated transcriptional repression. Interacts with host RBPJ. Interacts with host USP12 and WDR48; these interactions form a deubiquitination-competent complex.

Its subcellular location is the host nucleus matrix. In terms of biological role, plays an essential role for activation and immortalization of human B-cells. Represses transcription of viral promoters TP1 and Cp through interaction with host RBPJ, and inhibits EBNA2-mediated activation of these promoters. Since Cp is the promoter for all EBNA mRNAs, EBNA3A probably contributes to a negative autoregulatory control loop. The protein is Epstein-Barr nuclear antigen 3 (EBNA3) of Homo sapiens (Human).